Here is a 370-residue protein sequence, read N- to C-terminus: Probable protein phosphatase 2C 67 (370 aa).

The PPM-type phosphatase domain maps to 35-344; the sequence is TFGEFSMAMI…DDITVIVVYL (310 aa). Residues Asp77, Gly78, Asp276, and Asp335 each contribute to the Mn(2+) site.

It belongs to the PP2C family. As to quaternary structure, interacts with SAUR19. Interacts with AHA2 at the plasma membrane. Requires Mg(2+) as cofactor. Mn(2+) serves as cofactor.

It localises to the cell membrane. The enzyme catalyses O-phospho-L-seryl-[protein] + H2O = L-seryl-[protein] + phosphate. It carries out the reaction O-phospho-L-threonyl-[protein] + H2O = L-threonyl-[protein] + phosphate. Functionally, dephosphorylates and represses plasma membrane H(+)-ATPases (PM H(+)-ATPases, e.g. AHA1 and AHA2), thus influencing negatively plant growth and fitness. Promotes the apical hook maintenance of etiolated seedlings. The protein is Probable protein phosphatase 2C 67 of Arabidopsis thaliana (Mouse-ear cress).